A 250-amino-acid polypeptide reads, in one-letter code: Eukaryotic translation initiation factor 2 subunit 2 (250 aa).

The C4-type zinc-finger motif lies at Cys193 to Cys217.

It belongs to the eIF-2-beta/eIF-5 family. In terms of assembly, eukaryotic translation initiation factor 2 eIF2 is a heterotrimeric complex composed of an alpha, a beta and a gamma subunit.

The protein localises to the cytoplasm. Its subcellular location is the cytosol. Its function is as follows. Component of the eIF2 complex that functions in the early steps of protein synthesis by forming a ternary complex with GTP and initiator tRNA. This complex binds to a 40S ribosomal subunit, followed by mRNA binding to form a 43S pre-initiation complex (43S PIC). Junction of the 60S ribosomal subunit to form the 80S initiation complex is preceded by hydrolysis of the GTP bound to eIF2 and release of an eIF2-GDP binary complex. In order for eIF2 to recycle and catalyze another round of initiation, the GDP bound to eIF2 must exchange with GTP by way of a reaction catalyzed by eIF2B. The sequence is that of Eukaryotic translation initiation factor 2 subunit 2 from Caenorhabditis elegans.